A 62-amino-acid polypeptide reads, in one-letter code: Short neurotoxin C (62 aa).

Positions 1–16 are enriched in polar residues; the sequence is RRCFNQQSSQPQTNKS. Positions 1-22 are disordered; it reads RRCFNQQSSQPQTNKSCPPGEN. Cystine bridges form between cysteine 3–cysteine 24, cysteine 17–cysteine 41, cysteine 43–cysteine 54, and cysteine 55–cysteine 60.

This sequence belongs to the three-finger toxin family. Short-chain subfamily. Type I alpha-neurotoxin sub-subfamily. Expressed by the venom gland.

The protein localises to the secreted. In terms of biological role, binds to muscle nicotinic acetylcholine receptor (nAChR) and inhibit acetylcholine from binding to the receptor, thereby impairing neuromuscular transmission. The sequence is that of Short neurotoxin C from Laticauda laticaudata (Blue-ringed sea krait).